Consider the following 255-residue polypeptide: Ribonuclease PH (255 aa).

Residues Arg86 and 124 to 126 each bind phosphate; that span reads GTR.

Belongs to the RNase PH family. Homohexameric ring arranged as a trimer of dimers.

It catalyses the reaction tRNA(n+1) + phosphate = tRNA(n) + a ribonucleoside 5'-diphosphate. Functionally, phosphorolytic 3'-5' exoribonuclease that plays an important role in tRNA 3'-end maturation. Removes nucleotide residues following the 3'-CCA terminus of tRNAs; can also add nucleotides to the ends of RNA molecules by using nucleoside diphosphates as substrates, but this may not be physiologically important. Probably plays a role in initiation of 16S rRNA degradation (leading to ribosome degradation) during starvation. The protein is Ribonuclease PH of Hydrogenobaculum sp. (strain Y04AAS1).